The sequence spans 495 residues: 4-aminobutyrate aminotransferase (495 aa).

Position 160-161 (Gly160–Ser161) interacts with pyridoxal 5'-phosphate. Position 216 (Arg216) interacts with substrate. Lys350 carries the N6-(pyridoxal phosphate)lysine modification. Thr374 is a pyridoxal 5'-phosphate binding site.

The protein belongs to the class-III pyridoxal-phosphate-dependent aminotransferase family. In terms of assembly, homodimer. Requires pyridoxal 5'-phosphate as cofactor.

It carries out the reaction 4-aminobutanoate + 2-oxoglutarate = succinate semialdehyde + L-glutamate. This Dictyostelium discoideum (Social amoeba) protein is 4-aminobutyrate aminotransferase (gabT).